We begin with the raw amino-acid sequence, 923 residues long: Carnitine O-acetyltransferase YAT2 (923 aa).

Over residues 1–11 the composition is skewed to polar residues; it reads MSSGSTIVSSD. Disordered stretches follow at residues 1 to 21 and 197 to 232; these read MSSGSTIVSSDKSGRTFKHEE and NKPYTASDLEDPDYSSDEDDNDEPTQKDFDDRKRKH. Position 2 is an N-acetylserine (Ser2). Positions 12 to 21 are enriched in basic and acidic residues; it reads KSGRTFKHEE. The segment covering 204-219 has biased composition (acidic residues); the sequence is DLEDPDYSSDEDDNDE. Over residues 220–232 the composition is skewed to basic and acidic residues; it reads PTQKDFDDRKRKH. CoA-binding positions include 529–541 and Ser567; that span reads GRRSAQRLGVKPD. Ser576 provides a ligand contact to (R)-carnitine. The segment at 763-787 is disordered; that stretch reads NAVNNPPKRNGHTVNGSRKTSSSSQ. A compositionally biased stretch (polar residues) spans 774–787; it reads HTVNGSRKTSSSSQ. Ser783 is subject to Phosphoserine.

This sequence belongs to the carnitine/choline acetyltransferase family.

The protein resides in the cytoplasm. The catalysed reaction is (R)-carnitine + acetyl-CoA = O-acetyl-(R)-carnitine + CoA. Its function is as follows. Carnitine O-acetyltransferase involved in the shutteling of acetyl-CoA in the cell. The chain is Carnitine O-acetyltransferase YAT2 from Saccharomyces cerevisiae (strain ATCC 204508 / S288c) (Baker's yeast).